The following is a 554-amino-acid chain: Inactive sesquithujene synthase (554 aa).

Mg(2+) is bound by residues Asp-308 and Asp-312. Positions 308, 312, 449, and 452 each coordinate substrate. A DDXXD motif motif is present at residues 308–312 (DDMFD). Mg(2+)-binding residues include Asn-452, Ser-456, and Glu-460.

The protein belongs to the terpene synthase family. In terms of assembly, monomer. Mg(2+) serves as cofactor. Mn(2+) is required as a cofactor.

The protein resides in the cytoplasm. Its pathway is secondary metabolite biosynthesis; terpenoid biosynthesis. Its function is as follows. Non-functional sesquiterpene synthase having less than 1% of the activity found in cv. Delprim. The sequence is that of Inactive sesquithujene synthase from Zea mays (Maize).